Reading from the N-terminus, the 456-residue chain is L-seryl-tRNA(Sec) selenium transferase (456 aa).

Residue K288 is modified to N6-(pyridoxal phosphate)lysine.

It belongs to the SelA family. Pyridoxal 5'-phosphate serves as cofactor.

It localises to the cytoplasm. The enzyme catalyses L-seryl-tRNA(Sec) + selenophosphate + H(+) = L-selenocysteinyl-tRNA(Sec) + phosphate. Its pathway is aminoacyl-tRNA biosynthesis; selenocysteinyl-tRNA(Sec) biosynthesis; selenocysteinyl-tRNA(Sec) from L-seryl-tRNA(Sec) (bacterial route): step 1/1. In terms of biological role, converts seryl-tRNA(Sec) to selenocysteinyl-tRNA(Sec) required for selenoprotein biosynthesis. The chain is L-seryl-tRNA(Sec) selenium transferase from Helicobacter hepaticus (strain ATCC 51449 / 3B1).